A 310-amino-acid polypeptide reads, in one-letter code: B3 domain-containing transcription factor NGA1 (310 aa).

Positions 1–26 are disordered; the sequence is MMTDLSLTRDEDEEEAKPLAEEEGAR. A compositionally biased stretch (basic and acidic residues) spans 16 to 26; that stretch reads AKPLAEEEGAR. Residues 35–141 constitute a DNA-binding region (TF-B3); it reads FDKVVTPSDV…RLFIDWRRRP (107 aa). Over residues 251–268 the composition is skewed to low complexity; the sequence is ESGMTNSTEEESSSSGGS. Residues 251 to 310 form a disordered region; the sequence is ESGMTNSTEEESSSSGGSLPRGGGGGASSSSFFQLRLGSSSEDDHFTKKGKSSLSFDLDQ.

Interacts with BRX. Interacts with BZIP30.

The protein localises to the nucleus. Its function is as follows. Regulates lateral organ growth. Functionally redundant with NGA2, NGA3 and NGA4. The polypeptide is B3 domain-containing transcription factor NGA1 (NGA1) (Arabidopsis thaliana (Mouse-ear cress)).